The chain runs to 244 residues: Phosphoadenosine 5'-phosphosulfate reductase (244 aa).

Cys-239 functions as the Nucleophile; cysteine thiosulfonate intermediate in the catalytic mechanism.

Belongs to the PAPS reductase family. CysH subfamily.

Its subcellular location is the cytoplasm. The catalysed reaction is [thioredoxin]-disulfide + sulfite + adenosine 3',5'-bisphosphate + 2 H(+) = [thioredoxin]-dithiol + 3'-phosphoadenylyl sulfate. It participates in sulfur metabolism; hydrogen sulfide biosynthesis; sulfite from sulfate: step 3/3. Functionally, catalyzes the formation of sulfite from phosphoadenosine 5'-phosphosulfate (PAPS) using thioredoxin as an electron donor. The protein is Phosphoadenosine 5'-phosphosulfate reductase of Salmonella typhi.